The sequence spans 852 residues: Bifunctional isopimaradiene synthase, chloroplastic (852 aa).

The transit peptide at 1-53 (HHLTANTQSIPHFSTTLNAGSSARKRRSLYLRWGKGSNKIIACVGEGATSVPY) directs the protein to the chloroplast. Lys-252 is a binding site for substrate. The Mg(2+) site is built by Asp-385 and Asp-387. The short motif at 385-388 (DIDD) is the DXDD motif element. A substrate-binding site is contributed by Lys-472. Mg(2+) contacts are provided by Asp-604, Asp-608, Asn-748, Thr-752, and Glu-756. Positions 604 to 608 (DDLYD) match the DDXXD motif motif.

The protein belongs to the terpene synthase family. Tpsd subfamily. The cofactor is Mg(2+).

The protein localises to the plastid. Its subcellular location is the chloroplast. The catalysed reaction is (2E,6E,10E)-geranylgeranyl diphosphate = (+)-copalyl diphosphate. It carries out the reaction (+)-copalyl diphosphate = isopimara-7,15-diene + diphosphate. It functions in the pathway terpene metabolism; oleoresin biosynthesis. In terms of biological role, involved in defensive oleoresin formation in conifers in response to insect attack or other injury. Involved in diterpene (C20) olefins biosynthesis. Bifunctional enzyme that catalyzes two sequential cyclizations of geranylgeranyl diphosphate (GGPP) to isopimara-7,15-diene. The protein is Bifunctional isopimaradiene synthase, chloroplastic (TPS-ISO) of Abies balsamea (Balsam fir).